Consider the following 495-residue polypeptide: Aspartyl/glutamyl-tRNA(Asn/Gln) amidotransferase subunit B (495 aa).

The protein belongs to the GatB/GatE family. GatB subfamily. As to quaternary structure, heterotrimer of A, B and C subunits.

The enzyme catalyses L-glutamyl-tRNA(Gln) + L-glutamine + ATP + H2O = L-glutaminyl-tRNA(Gln) + L-glutamate + ADP + phosphate + H(+). It catalyses the reaction L-aspartyl-tRNA(Asn) + L-glutamine + ATP + H2O = L-asparaginyl-tRNA(Asn) + L-glutamate + ADP + phosphate + 2 H(+). Allows the formation of correctly charged Asn-tRNA(Asn) or Gln-tRNA(Gln) through the transamidation of misacylated Asp-tRNA(Asn) or Glu-tRNA(Gln) in organisms which lack either or both of asparaginyl-tRNA or glutaminyl-tRNA synthetases. The reaction takes place in the presence of glutamine and ATP through an activated phospho-Asp-tRNA(Asn) or phospho-Glu-tRNA(Gln). The chain is Aspartyl/glutamyl-tRNA(Asn/Gln) amidotransferase subunit B from Crocosphaera subtropica (strain ATCC 51142 / BH68) (Cyanothece sp. (strain ATCC 51142)).